The following is a 210-amino-acid chain: Thiamine-phosphate synthase (210 aa).

Residues 39-43 (QLREK) and N71 contribute to the 4-amino-2-methyl-5-(diphosphooxymethyl)pyrimidine site. The Mg(2+) site is built by D72 and D91. S110 is a 4-amino-2-methyl-5-(diphosphooxymethyl)pyrimidine binding site. 134–136 (TPT) is a binding site for 2-[(2R,5Z)-2-carboxy-4-methylthiazol-5(2H)-ylidene]ethyl phosphate. K137 contributes to the 4-amino-2-methyl-5-(diphosphooxymethyl)pyrimidine binding site. G163 contacts 2-[(2R,5Z)-2-carboxy-4-methylthiazol-5(2H)-ylidene]ethyl phosphate.

It belongs to the thiamine-phosphate synthase family. The cofactor is Mg(2+).

The catalysed reaction is 2-[(2R,5Z)-2-carboxy-4-methylthiazol-5(2H)-ylidene]ethyl phosphate + 4-amino-2-methyl-5-(diphosphooxymethyl)pyrimidine + 2 H(+) = thiamine phosphate + CO2 + diphosphate. The enzyme catalyses 2-(2-carboxy-4-methylthiazol-5-yl)ethyl phosphate + 4-amino-2-methyl-5-(diphosphooxymethyl)pyrimidine + 2 H(+) = thiamine phosphate + CO2 + diphosphate. It catalyses the reaction 4-methyl-5-(2-phosphooxyethyl)-thiazole + 4-amino-2-methyl-5-(diphosphooxymethyl)pyrimidine + H(+) = thiamine phosphate + diphosphate. Its pathway is cofactor biosynthesis; thiamine diphosphate biosynthesis; thiamine phosphate from 4-amino-2-methyl-5-diphosphomethylpyrimidine and 4-methyl-5-(2-phosphoethyl)-thiazole: step 1/1. Condenses 4-methyl-5-(beta-hydroxyethyl)thiazole monophosphate (THZ-P) and 2-methyl-4-amino-5-hydroxymethyl pyrimidine pyrophosphate (HMP-PP) to form thiamine monophosphate (TMP). This is Thiamine-phosphate synthase from Campylobacter jejuni (strain RM1221).